Consider the following 355-residue polypeptide: tRNA-specific 2-thiouridylase MnmA (355 aa).

ATP-binding positions include 7–14 (GLSGGVDS) and L33. Residue C94 is the Nucleophile of the active site. C94 and C193 are joined by a disulfide. G119 provides a ligand contact to ATP. An interaction with tRNA region spans residues 143 to 145 (KDQ). The active-site Cysteine persulfide intermediate is C193. An interaction with tRNA region spans residues 298-299 (RY).

It belongs to the MnmA/TRMU family.

Its subcellular location is the cytoplasm. It catalyses the reaction S-sulfanyl-L-cysteinyl-[protein] + uridine(34) in tRNA + AH2 + ATP = 2-thiouridine(34) in tRNA + L-cysteinyl-[protein] + A + AMP + diphosphate + H(+). In terms of biological role, catalyzes the 2-thiolation of uridine at the wobble position (U34) of tRNA, leading to the formation of s(2)U34. The polypeptide is tRNA-specific 2-thiouridylase MnmA (Acaryochloris marina (strain MBIC 11017)).